The sequence spans 252 residues: Imidazole glycerol phosphate synthase subunit HisF (252 aa).

Residues Asp11 and Asp130 contribute to the active site.

This sequence belongs to the HisA/HisF family. In terms of assembly, heterodimer of HisH and HisF.

The protein resides in the cytoplasm. The enzyme catalyses 5-[(5-phospho-1-deoxy-D-ribulos-1-ylimino)methylamino]-1-(5-phospho-beta-D-ribosyl)imidazole-4-carboxamide + L-glutamine = D-erythro-1-(imidazol-4-yl)glycerol 3-phosphate + 5-amino-1-(5-phospho-beta-D-ribosyl)imidazole-4-carboxamide + L-glutamate + H(+). The protein operates within amino-acid biosynthesis; L-histidine biosynthesis; L-histidine from 5-phospho-alpha-D-ribose 1-diphosphate: step 5/9. Its function is as follows. IGPS catalyzes the conversion of PRFAR and glutamine to IGP, AICAR and glutamate. The HisF subunit catalyzes the cyclization activity that produces IGP and AICAR from PRFAR using the ammonia provided by the HisH subunit. The sequence is that of Imidazole glycerol phosphate synthase subunit HisF from Bacillus cereus (strain AH820).